We begin with the raw amino-acid sequence, 420 residues long: Isocitrate dehydrogenase [NADP] (420 aa).

NADP(+) is bound by residues 75-77 (TIT) and Arg82. Thr77 contacts substrate. Substrate contacts are provided by residues 94 to 100 (SPNGTIR), Arg109, and Arg132. Asp252 serves as a coordination point for Mn(2+). Lys260 is a binding site for NADP(+). Asp275 contributes to the Mn(2+) binding site. NADP(+) is bound by residues 310–315 (GTVTRH) and Asn328.

Belongs to the isocitrate and isopropylmalate dehydrogenases family. Mg(2+) is required as a cofactor. Requires Mn(2+) as cofactor.

It carries out the reaction D-threo-isocitrate + NADP(+) = 2-oxoglutarate + CO2 + NADPH. Its function is as follows. May function in the production of NADPH for fatty acid and sterol synthesis. The chain is Isocitrate dehydrogenase [NADP] (IDP3) from Saccharomyces cerevisiae (strain ATCC 204508 / S288c) (Baker's yeast).